Here is a 96-residue protein sequence, read N- to C-terminus: uncharacterized protein (96 aa).

Positions 1–19 are cleaved as a signal peptide; the sequence is MKQIIPALITLSFSPMAIA.

This is an uncharacterized protein from Synechocystis sp. (strain ATCC 27184 / PCC 6803 / Kazusa).